Reading from the N-terminus, the 495-residue chain is Cytochrome P450 monooxygenase aneF (495 aa).

A helical membrane pass occupies residues 1-21 (MIAGLVLVVLLTKYLQRVFLH). Asparagine 47 carries N-linked (GlcNAc...) asparagine glycosylation. Cysteine 437 serves as a coordination point for heme.

It belongs to the cytochrome P450 family. Heme is required as a cofactor.

Its subcellular location is the membrane. It carries out the reaction dauca-4,7-diene + 3 reduced [NADPH--hemoprotein reductase] + 3 O2 = asperaculane D + 3 oxidized [NADPH--hemoprotein reductase] + 4 H2O + 4 H(+). Its pathway is secondary metabolite biosynthesis. In terms of biological role, cytochrome P450 monooxygenase; part of the gene cluster that mediates the biosynthesis of aculenes, a unique type of norsesquiterpenes that contain a nordaucane skeleton linked to an L-proline moiety and are of mixed biosynthetic origin. The pathway begins with the synthesis of dauca-4,7-diene by the terpene cyclase aneC using farnesyl pyrophosphate (FPP) as substrate. The cytochrome P450 monooxygenase aneF then performs the initial oxidation at C-12 of dauca-4,7-diene to yield asperaculane D. Asperaculane D is substrate of the cytochrome P450 monooxygenase aneD for C-10 hydroxylation to yield asperaculane E. The cytochrome P450 monooxygenase aneG then converts asperaculane E into aculene D via C-2 oxidation. The monomodular nonribosomal peptide synthtase aneB adenylates L-proline and the thiohydrolase aneE transfers this activated L-proline derivative to aculenes D and C to produce respectively aculenes B and A. The dioxygenase aneA converts aculene D into aculene C, and aculene B into aculene A by introducing the 5,6-alkene moiety. Asperculanes A, B, C and F, as well as 14-prolyl asperculane C, might be shunt products of the pathway. This chain is Cytochrome P450 monooxygenase aneF, found in Aspergillus aculeatus (strain ATCC 16872 / CBS 172.66 / WB 5094).